The primary structure comprises 1144 residues: Ribonucleoside-diphosphate reductase large subunit (1144 aa).

A disordered region spans residues 1–33; the sequence is MANRPAASALAGARSPSERQEPREPEVAPPGGD. Basic and acidic residues predominate over residues 16–26; sequence PSERQEPREPE. The short motif at 55 to 75 is the RIP homotypic interaction motif (RHIM) element; sequence AYRISDSSFVQCGSNCSMIID. A disordered region spans residues 118–324; sequence SGPSATTSVG…TDPGYPVPLE (207 aa). Residues 119–132 show a composition bias toward polar residues; that stretch reads GPSATTSVGTQTSG. Over residues 141–159 the composition is skewed to pro residues; that stretch reads TPEPQGPQAVPPPPPPPFP. Over residues 164 to 179 the composition is skewed to basic and acidic residues; it reads CCARRDARGGAEKDVG. The span at 192 to 204 shows a compositional bias: acidic residues; that stretch reads SETEDSDSSDEDT. 2 stretches are compositionally biased toward low complexity: residues 205 to 216 and 279 to 305; these read GSGSETLSRSSS and GSATDPRASADSDSAAHAAAPQADVAP. Substrate-binding positions include Thr573, 588–589, Gly619, 798–802, and 975–979; these read SC, NLCTE, and PTAAS. The cysteines at positions 589 and 815 are disulfide-linked. Asn798 serves as the catalytic Proton acceptor. Catalysis depends on Cys800, which acts as the Cysteine radical intermediate. Residue Glu802 is the Proton acceptor of the active site.

It belongs to the ribonucleoside diphosphate reductase large chain family. In terms of assembly, heterotetramer composed of a homodimer of the large subunit (R1) and a homodimer of the small subunit (R2). Larger multisubunit protein complex are also active, composed of (R1)n(R2)n. May self-assemble (via RIP homotypic interaction motif/RHIM) into homomeric fibrillar amyloid structures. Interacts (via RHIM) with human RIPK1 (via RHIM). Interacts (via RHIM) with human RIPK3 (via RHIM). May interact (via RHIM) with human ZBP1 (via RHIM). Interacts (via C-terminus) with host CASP8.

It carries out the reaction a 2'-deoxyribonucleoside 5'-diphosphate + [thioredoxin]-disulfide + H2O = a ribonucleoside 5'-diphosphate + [thioredoxin]-dithiol. In terms of biological role, ribonucleoside-diphosphate reductase holoenzyme that provides the precursors necessary for viral DNA synthesis. Allows virus growth in non-dividing cells, as well as reactivation from latency in infected hosts. Catalyzes the biosynthesis of deoxyribonucleotides from the corresponding ribonucleotides. The N-terminal region confers antiapoptotic activity in differentiated cells such as neurons and is important for viral reactivation to increase neural survivability. Prevents host necroptosis by targeting host RIPK1 and RIPK3, thereby hampering the formation of necroptotic RIPK1-RIPK3 complexes. May form hetero-amyloid structures with host proteins RIPK3 or ZBP1, thereby preventing RIPK3- and ZBP1-mediated necroptosis. In addition, inhibits extrinsic apoptosis by targeting host CASP8. This Homo sapiens (Human) protein is Ribonucleoside-diphosphate reductase large subunit.